The sequence spans 39 residues: Conotoxin ArMSGL-013 (39 aa).

Residues 1–5 (RRSLT) constitute a propeptide that is removed on maturation. 3 disulfides stabilise this stretch: cysteine 12–cysteine 24, cysteine 16–cysteine 33, and cysteine 23–cysteine 37. The residue at position 38 (tryptophan 38) is a Tryptophan amide.

This sequence belongs to the conotoxin O3 superfamily. Expressed by the venom duct.

The protein localises to the secreted. This Conus arenatus (Sand-dusted cone) protein is Conotoxin ArMSGL-013.